Here is a 355-residue protein sequence, read N- to C-terminus: UDP-3-O-acylglucosamine N-acyltransferase (355 aa).

His248 (proton acceptor) is an active-site residue.

It belongs to the transferase hexapeptide repeat family. LpxD subfamily. In terms of assembly, homotrimer.

The catalysed reaction is a UDP-3-O-[(3R)-3-hydroxyacyl]-alpha-D-glucosamine + a (3R)-hydroxyacyl-[ACP] = a UDP-2-N,3-O-bis[(3R)-3-hydroxyacyl]-alpha-D-glucosamine + holo-[ACP] + H(+). The protein operates within bacterial outer membrane biogenesis; LPS lipid A biosynthesis. Catalyzes the N-acylation of UDP-3-O-acylglucosamine using 3-hydroxyacyl-ACP as the acyl donor. Is involved in the biosynthesis of lipid A, a phosphorylated glycolipid that anchors the lipopolysaccharide to the outer membrane of the cell. This Synechococcus elongatus (strain ATCC 33912 / PCC 7942 / FACHB-805) (Anacystis nidulans R2) protein is UDP-3-O-acylglucosamine N-acyltransferase.